The primary structure comprises 286 residues: 5-amino-6-(5-phospho-D-ribitylamino)uracil phosphatase YwtE (286 aa).

The active-site Nucleophile is Asp7. Residue Asp7 coordinates Mg(2+). Leu8 is a binding site for phosphate. Residue Asp9 coordinates Mg(2+). Phosphate-binding positions include 41–42 (TG) and Lys210. Mg(2+) is bound by residues Asp233 and Ser234. A phosphate-binding site is contributed by Asn236.

It belongs to the HAD-like hydrolase superfamily. Cof family. It depends on Mg(2+) as a cofactor.

The enzyme catalyses 5-amino-6-(5-phospho-D-ribitylamino)uracil + H2O = 5-amino-6-(D-ribitylamino)uracil + phosphate. Its pathway is cofactor biosynthesis; riboflavin biosynthesis; 5-amino-6-(D-ribitylamino)uracil from GTP: step 4/4. Its function is as follows. Catalyzes the dephosphorylation of the riboflavin precursor 5-amino-6-(5-phospho-D-ribitylamino)uracil and of flavin mononucleotide (FMN) in vitro. Also catalyzes the dephosphorylation of phosphorylated 5-6 carbon sugars and monophosphate nucleotides (NMP) in vitro. The chain is 5-amino-6-(5-phospho-D-ribitylamino)uracil phosphatase YwtE (ywtE) from Bacillus subtilis (strain 168).